We begin with the raw amino-acid sequence, 691 residues long: Elongation factor G (691 aa).

Residues 8-283 form the tr-type G domain; sequence EDYRNFGIMA…AVVDYLPTPI (276 aa). GTP is bound by residues 17 to 24, 81 to 85, and 135 to 138; these read AHIDAGKT, DTPGH, and NKMD.

This sequence belongs to the TRAFAC class translation factor GTPase superfamily. Classic translation factor GTPase family. EF-G/EF-2 subfamily.

It localises to the cytoplasm. In terms of biological role, catalyzes the GTP-dependent ribosomal translocation step during translation elongation. During this step, the ribosome changes from the pre-translocational (PRE) to the post-translocational (POST) state as the newly formed A-site-bound peptidyl-tRNA and P-site-bound deacylated tRNA move to the P and E sites, respectively. Catalyzes the coordinated movement of the two tRNA molecules, the mRNA and conformational changes in the ribosome. This chain is Elongation factor G, found in Beijerinckia indica subsp. indica (strain ATCC 9039 / DSM 1715 / NCIMB 8712).